Here is a 345-residue protein sequence, read N- to C-terminus: Ephrin-B1 (345 aa).

The signal sequence occupies residues 1–24; it reads MARPGQRWLSKWLVAMVVLTLCRL. Residues 25–236 are Extracellular-facing; that stretch reads ATPLAKNLEP…GDSDSFFNSK (212 aa). In terms of domain architecture, Ephrin RBD spans 30-164; sequence KNLEPVSWSS…TRTMKIVMKV (135 aa). Cystine bridges form between C64–C101 and C89–C153. N-linked (GlcNAc...) asparagine glycosylation occurs at N139. A disordered region spans residues 169–227; it reads NAVTPEQLTTSRPSKESDNTVKTATQAPGRGSQGDSDGKHETVNQEEKSGPGAGGGGSG. Residues 204 to 217 are compositionally biased toward basic and acidic residues; that stretch reads SDGKHETVNQEEKS. Residues 237–257 traverse the membrane as a helical segment; it reads VALFAAVGAGCVIFLLIIIFL. Over 258 to 345 the chain is Cytoplasmic; the sequence is TVLLLKLRKR…QSPANIYYKV (88 aa). The Nuclear localization signal signature appears at 259-272; that stretch reads VLLLKLRKRHRKHT. The segment at 262 to 293 is interaction with ZHX2; it reads LKLRKRHRKHTQQRAAALSLSTLASPKGGSGT. Residues S280 and S286 each carry the phosphoserine modification. The short motif at 343–345 is the PDZ-binding element; the sequence is YKV.

It belongs to the ephrin family. As to quaternary structure, interacts (via PDZ-binding motif) with GRIP1 and GRIP2 (via PDZ domain 6). Interacts with TLE1. The intracellular domain peptide interacts with ZHX2; the interaction enhances ZHX2 transcriptional repression activity. Post-translationally, inducible phosphorylation of tyrosine residues in the cytoplasmic domain. In terms of processing, proteolytically processed. The ectodomain is cleaved, probably by a metalloprotease, to produce a membrane-tethered C-terminal fragment. This fragment is then further processed by the gamma-secretase complex to yield a soluble intracellular domain peptide which can translocate to the nucleus. The intracellular domain peptide is highly labile suggesting that it is targeted for degradation by the proteasome. As to expression, expressed on lateral floor plate cells, specifically on commissural axon segments that have passed through the floor plate. Expressed in cells of the retinal ganglion cell layer during retinal axon guidance to the optic disk. Expressed in myogenic progenitor cells.

The protein resides in the cell membrane. It is found in the membrane raft. It localises to the nucleus. Its function is as follows. Cell surface transmembrane ligand for Eph receptors, a family of receptor tyrosine kinases which are crucial for migration, repulsion and adhesion during neuronal, vascular and epithelial development. Binding to Eph receptors residing on adjacent cells leads to contact-dependent bidirectional signaling into neighboring cells. Shows high affinity for the receptor tyrosine kinase EPHB1/ELK. Can also bind EPHB2 and EPHB3. Binds to, and induces the collapse of, commissural axons/growth cones in vitro. May play a role in constraining the orientation of longitudinally projecting axons. The protein is Ephrin-B1 (Efnb1) of Mus musculus (Mouse).